Consider the following 72-residue polypeptide: Threonine dehydratase operon activator protein (72 aa).

In terms of biological role, probable trans-acting positive activator for the tdc operon. This Escherichia coli (strain K12) protein is Threonine dehydratase operon activator protein (tdcR).